Here is a 529-residue protein sequence, read N- to C-terminus: Type I inositol polyphosphate 5-phosphatase 5 (529 aa).

2 catalytic regions span residues 371-386 (DRVL…VALT) and 451-466 (KRRT…WKGE).

This sequence belongs to the inositol polyphosphate 5-phosphatase family.

May be involved in the regulation of root hairs development. Required for restricting both the size of the root-hair initiation site and the width of the root hairs during the transition to tip growth, but is not required for normal subsequent tip growth. The protein is Type I inositol polyphosphate 5-phosphatase 5 of Arabidopsis thaliana (Mouse-ear cress).